A 597-amino-acid polypeptide reads, in one-letter code: Elongation factor 4 (597 aa).

The tr-type G domain maps to 2-184 (DHIRNFSIIA…ALIAKVPPPK (183 aa)). GTP contacts are provided by residues 14–19 (DHGKST) and 131–134 (NKID).

It belongs to the TRAFAC class translation factor GTPase superfamily. Classic translation factor GTPase family. LepA subfamily.

Its subcellular location is the cell inner membrane. It carries out the reaction GTP + H2O = GDP + phosphate + H(+). In terms of biological role, required for accurate and efficient protein synthesis under certain stress conditions. May act as a fidelity factor of the translation reaction, by catalyzing a one-codon backward translocation of tRNAs on improperly translocated ribosomes. Back-translocation proceeds from a post-translocation (POST) complex to a pre-translocation (PRE) complex, thus giving elongation factor G a second chance to translocate the tRNAs correctly. Binds to ribosomes in a GTP-dependent manner. This is Elongation factor 4 from Paraburkholderia phymatum (strain DSM 17167 / CIP 108236 / LMG 21445 / STM815) (Burkholderia phymatum).